Reading from the N-terminus, the 354-residue chain is Replication factor C subunit 3 (354 aa).

Position 41-48 (41-48 (GPSGSGKK)) interacts with ATP.

It belongs to the activator 1 small subunits family. In terms of assembly, heterotetramer of subunits RFC2, RFC3, RFC4 and RFC5 that can form a complex with RFC1.

It is found in the nucleus. Its function is as follows. May be involved in DNA replication and thus regulate cell proliferation. The sequence is that of Replication factor C subunit 3 (RFC3) from Arabidopsis thaliana (Mouse-ear cress).